Here is a 173-residue protein sequence, read N- to C-terminus: Small ribosomal subunit protein uS5 (173 aa).

The 64-residue stretch at 18 to 81 (LREKMIAVNR…EQARRGMFKV (64 aa)) folds into the S5 DRBM domain.

It belongs to the universal ribosomal protein uS5 family. In terms of assembly, part of the 30S ribosomal subunit. Contacts proteins S4 and S8.

In terms of biological role, with S4 and S12 plays an important role in translational accuracy. Its function is as follows. Located at the back of the 30S subunit body where it stabilizes the conformation of the head with respect to the body. The sequence is that of Small ribosomal subunit protein uS5 from Bordetella avium (strain 197N).